Reading from the N-terminus, the 389-residue chain is Glutamate 5-kinase (389 aa).

K16 contacts ATP. Substrate contacts are provided by S56, D143, and N155. Residue 175–176 (SD) participates in ATP binding. A PUA domain is found at 281 to 358 (AGGLHVDDGA…AEIEAILGYP (78 aa)).

This sequence belongs to the glutamate 5-kinase family.

Its subcellular location is the cytoplasm. The catalysed reaction is L-glutamate + ATP = L-glutamyl 5-phosphate + ADP. The protein operates within amino-acid biosynthesis; L-proline biosynthesis; L-glutamate 5-semialdehyde from L-glutamate: step 1/2. In terms of biological role, catalyzes the transfer of a phosphate group to glutamate to form L-glutamate 5-phosphate. This chain is Glutamate 5-kinase, found in Rhizobium leguminosarum bv. trifolii (strain WSM2304).